The following is an 84-amino-acid chain: Toxin BmKaTx16 (84 aa).

Residues 1–19 form the signal peptide; the sequence is MNYLVMISFALLLMTGVES. An LCN-type CS-alpha/beta domain is found at 21-83; that stretch reads RDAYIAKPHN…VPIRVPGKCH (63 aa). Intrachain disulfides connect cysteine 31–cysteine 82, cysteine 35–cysteine 55, cysteine 41–cysteine 65, and cysteine 45–cysteine 67. Position 84 (arginine 84) is a propeptide, removed by a carboxypeptidase.

Belongs to the long (4 C-C) scorpion toxin superfamily. Sodium channel inhibitor family. Alpha subfamily. Expressed by the venom gland.

The protein localises to the secreted. Alpha toxins bind voltage-independently at site-3 of sodium channels (Nav) and inhibit the inactivation of the activated channels, thereby blocking neuronal transmission. The polypeptide is Toxin BmKaTx16 (Olivierus martensii (Manchurian scorpion)).